The chain runs to 1512 residues: DNA (cytosine-5)-methyltransferase 2 (1512 aa).

The span at 1–22 (METKVGKQKKRSVDSNDDVSKE) shows a compositional bias: basic and acidic residues. 2 disordered regions span residues 1 to 35 (METKVGKQKKRSVDSNDDVSKERRPKRAAACRNFK) and 634 to 678 (AIHE…GNSE). Residues 638 to 662 (VEEEEIEEDEEEDENEEDDIEEEAV) show a composition bias toward acidic residues. 2 BAH domains span residues 707 to 841 (ETVA…FSLP) and 909 to 1026 (TTLK…KQFP). An SAM-dependent MTase C5-type domain is found at 1071–1505 (LATLDIFAGC…RKLKEALYLK (435 aa)). Cys1176 is a catalytic residue.

This sequence belongs to the class I-like SAM-binding methyltransferase superfamily. C5-methyltransferase family. Expressed at low levels in vegetative and floral organs.

Its subcellular location is the nucleus. It carries out the reaction a 2'-deoxycytidine in DNA + S-adenosyl-L-methionine = a 5-methyl-2'-deoxycytidine in DNA + S-adenosyl-L-homocysteine + H(+). Functionally, maintains chromatin CpG methylation that plays a role in genomic imprinting, regulation of embryogenesis and seed viability. Required for proper patterns of CG DNA methylation in dividing cells. The protein is DNA (cytosine-5)-methyltransferase 2 (MET2) of Arabidopsis thaliana (Mouse-ear cress).